We begin with the raw amino-acid sequence, 129 residues long: Small ribosomal subunit protein uS11 (129 aa).

It belongs to the universal ribosomal protein uS11 family. As to quaternary structure, part of the 30S ribosomal subunit. Interacts with proteins S7 and S18. Binds to IF-3.

In terms of biological role, located on the platform of the 30S subunit, it bridges several disparate RNA helices of the 16S rRNA. Forms part of the Shine-Dalgarno cleft in the 70S ribosome. The sequence is that of Small ribosomal subunit protein uS11 from Erythrobacter litoralis (strain HTCC2594).